The primary structure comprises 589 residues: Serine/threonine-protein phosphatase 2A 65 kDa regulatory subunit A alpha isoform (589 aa).

Residue A2 is modified to N-acetylalanine. 15 HEAT repeats span residues 8–46 (DSLY…GVER), 47–84 (TRSE…GGPE), 85–123 (YVHC…SPSD), 124–161 (LEAH…VSSA), 162–200 (VKAE…ELDN), 201–239 (VKSE…PQED), 240–278 (LEAL…GPEI), 279–321 (TKTD…RENV), 322–360 (IMSQ…GKDN), 361–399 (TIEH…GIRQ), 400–438 (LSQS…GVEF), 439–477 (FDEK…GKEW), 478–516 (AHAT…GQDI), 517–555 (TTKH…DNST), and 556–589 (LQSE…LSLA). The segment at 8 to 399 (DSLYPIAVLI…CVNEVIGIRQ (392 aa)) is PP2A subunit B binding. Residues 47 to 321 (TRSELLPFLT…NLSADCRENV (275 aa)) are polyoma small and medium T antigens Binding. Residues 85–239 (YVHCLLPPLE…NIAQLLPQED (155 aa)) are SV40 small T antigen binding. K280 carries the post-translational modification N6-acetyllysine. The interval 400–589 (LSQSLLPAIV…QEALTVLSLA (190 aa)) is PP2A subunit C binding.

Belongs to the phosphatase 2A regulatory subunit A family. PP2A consists of a common heterodimeric core enzyme, composed of PPP2CA a 36 kDa catalytic subunit (subunit C) and PPP2R1A a 65 kDa constant regulatory subunit (PR65 or subunit A), that associates with a variety of regulatory subunits. Proteins that associate with the core dimer include three families of regulatory subunits B (the R2/B/PR55/B55, R3/B''/PR72/PR130/PR59 and R5/B'/B56 families), the 48 kDa variable regulatory subunit, viral proteins, and cell signaling molecules. Found in a complex with at least ARL2, PPP2CB, PPP2R1A, PPP2R2A, PPP2R5E and TBCD. Interacts with the PP2A C catalytic subunit PPP2CA. Interacts with the PP2A B subunit PPP2R2A. Interacts with the PP2A B subunit PPP2R5D. Interacts with FOXO1; the interaction dephosphorylates FOXO1 on AKT-mediated phosphorylation sites. Interacts with IPO9. Interacts with TP53 and SGO1. Interacts with PLA2G16; this interaction might decrease PP2A activity. Interacts with CTTNBP2NL. Interacts with GNA12; the interaction promotes protein phosphatase 2A activation causing dephosphorylation of MAPT. Interacts with CIP2A; this interaction stabilizes CIP2A. Interacts with PABIR1/FAM122A. Interacts with ADCY8; antagonizes interaction between ADCY8 and calmodulin. Interacts with CRTC3 (when phosphorylated at 'Ser-391'). Interacts with SPRY2. Part of the core of STRIPAK complexes composed of PP2A catalytic and scaffolding subunits, the striatins (PP2A regulatory subunits), the striatin-associated proteins MOB4, STRIP1 and STRIP2, PDCD10 and members of the STE20 kinases, such as STK24 and STK26. Component of the Integrator-PP2A (INTAC) complex, composed of the Integrator core complex and protein phosphatase 2A subunits PPP2CA and PPP2R1A. As to quaternary structure, (Microbial infection) Interacts with JC virus small t antigen; this interaction inhibits PPP2R1A activity.

The protein localises to the cytoplasm. The protein resides in the nucleus. Its subcellular location is the chromosome. It localises to the centromere. It is found in the lateral cell membrane. The protein localises to the cell projection. The protein resides in the dendrite. In terms of biological role, the PR65 subunit of protein phosphatase 2A serves as a scaffolding molecule to coordinate the assembly of the catalytic subunit and a variable regulatory B subunit. Upon interaction with GNA12 promotes dephosphorylation of microtubule associated protein TAU/MAPT. Required for proper chromosome segregation and for centromeric localization of SGO1 in mitosis. Together with RACK1 adapter, mediates dephosphorylation of AKT1 at 'Ser-473', preventing AKT1 activation and AKT-mTOR signaling pathway. Dephosphorylation of AKT1 is essential for regulatory T-cells (Treg) homeostasis and stability. Part of the striatin-interacting phosphatase and kinase (STRIPAK) complexes. STRIPAK complexes have critical roles in protein (de)phosphorylation and are regulators of multiple signaling pathways including Hippo, MAPK, nuclear receptor and cytoskeleton remodeling. Different types of STRIPAK complexes are involved in a variety of biological processes such as cell growth, differentiation, apoptosis, metabolism and immune regulation. Key mediator of a quality checkpoint during transcription elongation as part of the Integrator-PP2A (INTAC) complex. The INTAC complex drives premature transcription termination of transcripts that are unfavorably configured for transcriptional elongation: within the INTAC complex, acts as a scaffolding subunit for PPP2CA, which catalyzes dephosphorylation of the C-terminal domain (CTD) of Pol II subunit POLR2A/RPB1 and SUPT5H/SPT5, thereby preventing transcriptional elongation. Regulates the recruitment of the SKA complex to kinetochores. The chain is Serine/threonine-protein phosphatase 2A 65 kDa regulatory subunit A alpha isoform from Homo sapiens (Human).